Here is a 161-residue protein sequence, read N- to C-terminus: MKYDTSELCDIYQEDVNVVEPLFSNFGGRASFGGQIITVKCFEDNGLLYDLLEQNGRGRVLVVDGGGSVRRALVDAELARLAVQNEWEGLVIYGAVRQVDDLEELDIGIQAMAAIPVGAAGEGIGESDVRVNFGGVTFFSGDHLYADNTGIILSEDPLDIE.

Belongs to the RraA family. Homotrimer. Binds to both RNA-binding sites in the C-terminal region of Rne and to RhlB.

The protein localises to the cytoplasm. Globally modulates RNA abundance by binding to RNase E (Rne) and regulating its endonucleolytic activity. Can modulate Rne action in a substrate-dependent manner by altering the composition of the degradosome. Modulates RNA-binding and helicase activities of the degradosome. The chain is Regulator of ribonuclease activity A from Shigella boydii serotype 18 (strain CDC 3083-94 / BS512).